We begin with the raw amino-acid sequence, 463 residues long: L-seryl-tRNA(Sec) selenium transferase (463 aa).

Position 295 is an N6-(pyridoxal phosphate)lysine (Lys295).

This sequence belongs to the SelA family. In terms of assembly, homodecamer; pentamer of dimers. Binds only one seryl-tRNA(Sec) per dimer. Requires pyridoxal 5'-phosphate as cofactor.

Its subcellular location is the cytoplasm. It catalyses the reaction L-seryl-tRNA(Sec) + selenophosphate + H(+) = L-selenocysteinyl-tRNA(Sec) + phosphate. The protein operates within aminoacyl-tRNA biosynthesis; selenocysteinyl-tRNA(Sec) biosynthesis; selenocysteinyl-tRNA(Sec) from L-seryl-tRNA(Sec) (bacterial route): step 1/1. In terms of biological role, converts seryl-tRNA(Sec) to selenocysteinyl-tRNA(Sec) required for selenoprotein biosynthesis. This is L-seryl-tRNA(Sec) selenium transferase from Serratia proteamaculans (strain 568).